Reading from the N-terminus, the 329-residue chain is Strigolactones hydrolase CXE15 (329 aa).

The Involved in the stabilization of the negatively charged intermediate by the formation of the oxyanion hole motif lies at 83–85; it reads HGG. Residues G85, G86, S169, and S170 each contribute to the (-)-2'-epi-GR24 site. The active-site Nucleophile is S169. Residues E271 and H302 contribute to the active site.

Belongs to the 'GDXG' lipolytic enzyme family. Expressed in axillary buds, leaves, stems, hypocotyls, flowers, siliques, and vasculatures of shoots and roots.

The protein resides in the nucleus. Its subcellular location is the cytoplasm. It localises to the cytosol. The enzyme catalyses (-)-2'-epi-GR24 + H2O = (-)-2'-epi-GR24 ABC-rings + 5-hydroxy-3-methylfuran-2(5H)-one. The catalysed reaction is 5-deoxystrigol + H2O = 5-deoxystrigol ABC-rings + 5-hydroxy-3-methylfuran-2(5H)-one. It catalyses the reaction orobanchol + H2O = orobanchol ABC-rings + 5-hydroxy-3-methylfuran-2(5H)-one. In terms of biological role, binds to strigolactones (SLs) such as (-)-2'-epi-GR24(4DO), 5-deoxystrigol (5DS) and orobanchol, and catalyzes their hydrolysis; SL are phytohormones controlling shoot branching and communications between plants and microorganisms. Promotes shoot branching by dampening SL-inhibited axillary bud outgrowth. The sequence is that of Strigolactones hydrolase CXE15 from Arabidopsis thaliana (Mouse-ear cress).